Here is a 123-residue protein sequence, read N- to C-terminus: Large ribosomal subunit protein uL14 (123 aa).

It belongs to the universal ribosomal protein uL14 family. As to quaternary structure, part of the 50S ribosomal subunit. Forms a cluster with proteins L3 and L19. In the 70S ribosome, L14 and L19 interact and together make contacts with the 16S rRNA in bridges B5 and B8.

Binds to 23S rRNA. Forms part of two intersubunit bridges in the 70S ribosome. The protein is Large ribosomal subunit protein uL14 of Pectobacterium atrosepticum (strain SCRI 1043 / ATCC BAA-672) (Erwinia carotovora subsp. atroseptica).